We begin with the raw amino-acid sequence, 288 residues long: Proteasome subunit beta (288 aa).

Positions 1 to 60 (MESNADWGSRGGLPQAFLTPGISSFSEFLKGFAPEYLPSGRPLPGGLGSASAAGDIAPHG) are cleaved as a propeptide — removed in mature form; by autocatalysis. The Nucleophile role is filled by Thr61.

Belongs to the peptidase T1B family. In terms of assembly, the 20S proteasome core is composed of 14 alpha and 14 beta subunits that assemble into four stacked heptameric rings, resulting in a barrel-shaped structure. The two inner rings, each composed of seven catalytic beta subunits, are sandwiched by two outer rings, each composed of seven alpha subunits. The catalytic chamber with the active sites is on the inside of the barrel. Has a gated structure, the ends of the cylinder being occluded by the N-termini of the alpha-subunits. Is capped by the proteasome-associated ATPase, ARC.

It localises to the cytoplasm. The enzyme catalyses Cleavage of peptide bonds with very broad specificity.. Its pathway is protein degradation; proteasomal Pup-dependent pathway. With respect to regulation, the formation of the proteasomal ATPase ARC-20S proteasome complex, likely via the docking of the C-termini of ARC into the intersubunit pockets in the alpha-rings, may trigger opening of the gate for substrate entry. Interconversion between the open-gate and close-gate conformations leads to a dynamic regulation of the 20S proteasome proteolysis activity. Component of the proteasome core, a large protease complex with broad specificity involved in protein degradation. In Catenulispora acidiphila (strain DSM 44928 / JCM 14897 / NBRC 102108 / NRRL B-24433 / ID139908), this protein is Proteasome subunit beta.